The chain runs to 219 residues: Auxin-responsive protein IAA24 (219 aa).

An EAR-like (transcriptional repression) motif is present at residues 24-28 (LCLRL). Disordered stretches follow at residues 24–88 (LCLR…AKAQ) and 109–128 (AAAATKKGGDEKQKQQQQGG). The segment covering 60–71 (STDSMASGTGTS) has biased composition (polar residues). In terms of domain architecture, PB1 spans 129 to 215 (GLYVKVSMDG…SCKKLRIMKG (87 aa)).

Belongs to the Aux/IAA family. Homodimers and heterodimers. Highly expressed in flowers. Expressed in seedlings.

The protein localises to the nucleus. Aux/IAA proteins are short-lived transcriptional factors that function as repressors of early auxin response genes at low auxin concentrations. In Oryza sativa subsp. japonica (Rice), this protein is Auxin-responsive protein IAA24 (IAA24).